A 391-amino-acid polypeptide reads, in one-letter code: Thyroid hormone receptor alpha-B (391 aa).

A modulating region spans residues 1 to 32 (MAQWPEKEEEEQPMFGEEYTGYIPSYLEKDEP). NR C4-type zinc fingers lie at residues 33–53 (CVVC…CEGC) and 71–95 (CKYD…FKKC). A DNA-binding region (nuclear receptor) is located at residues 33–100 (CVVCGDKATG…RFKKCIAVGM (68 aa)). The region spanning 143 to 388 (AEWELIRMVT…PPLFLEVFED (246 aa)) is the NR LBD domain.

This sequence belongs to the nuclear hormone receptor family. NR1 subfamily.

Its subcellular location is the nucleus. Functionally, high affinity receptor for triiodothyronine. This chain is Thyroid hormone receptor alpha-B (thra2), found in Paralichthys olivaceus (Bastard halibut).